The chain runs to 1210 residues: AF4/FMR2 family member 1 (1210 aa).

Disordered regions lie at residues 1-45 (MAAQ…GEPY), 73-314 (TKSH…KPLP), 366-957 (SWPP…KPQV), and 1098-1119 (TGTP…SQSS). 2 stretches are compositionally biased toward basic and acidic residues: residues 9 to 35 (NDDR…EAFP) and 78 to 87 (HRLDASENRL). Phosphoserine is present on residues Ser199, Ser206, and Ser212. Positions 215–238 (HSNQQTLPRTQGSSKVHGSSNNSK) are enriched in polar residues. Thr220 carries the post-translational modification Phosphothreonine. The segment covering 245-259 (SPKDLAVKVHDKETP) has biased composition (basic and acidic residues). A compositionally biased stretch (pro residues) spans 267 to 279 (AQPPSQTFPPPSL). Over residues 394–419 (HVSSVTQNQKQYDTSSKTHSNSQQGT) the composition is skewed to polar residues. Residues 423-439 (LEDDLQLSDSEDSDSEQ) show a composition bias toward acidic residues. Pro residues predominate over residues 442–453 (EKPPSSSAPPSA). The segment covering 454–472 (PQSLPEPVASAHSSSAESE) has biased composition (low complexity). Positions 473-497 (STSDSDSSSDSESESSSSDSEENEP) are enriched in acidic residues. The span at 536–546 (EPPRRHPESKG) shows a compositional bias: basic and acidic residues. Positions 586–602 (QKSPAQQEPPQRQTVGT) are enriched in polar residues. A Phosphoserine modification is found at Ser588. The residue at position 681 (Lys681) is an N6-acetyllysine. The segment covering 688–699 (PAKDNVEDRTPE) has biased composition (basic and acidic residues). Thr697 carries the post-translational modification Phosphothreonine. The segment covering 707 to 724 (TESQGPPHSGSGSRTSGC) has biased composition (polar residues). Residues 732-747 (EDSRKDRLPLPLRDTK) are compositionally biased toward basic and acidic residues. Ser750 is modified (phosphoserine). Thr755 bears the Phosphothreonine mark. Residues 816–834 (GEAERDCDNKKIRLEKEIK) show a composition bias toward basic and acidic residues. A compositionally biased stretch (low complexity) spans 871–880 (SSSSQKPAKP). Residues 906–932 (NHKDSSIPKQRRVEGKGSRSSSEHKGS) show a composition bias toward basic and acidic residues. A compositionally biased stretch (low complexity) spans 1110 to 1119 (PASSVGSQSS).

The protein belongs to the AF4 family. In terms of assembly, component of the super elongation complex (SEC), at least composed of EAF1, EAF2, CDK9, MLLT3/AF9, AFF (AFF1 or AFF4), the P-TEFb complex and ELL (ELL, ELL2 or ELL3).

It is found in the nucleus. The protein is AF4/FMR2 family member 1 (AFF1) of Homo sapiens (Human).